Consider the following 37-residue polypeptide: M-oxotoxin-Ot2b (37 aa).

Expressed by the venom gland.

The protein localises to the secreted. In terms of biological role, disrupts biological membranes, particularly those rich in phosphocholine. Has antimicrobial activity against Gram-negative bacterium E.coli, Gram-positive bacteria B.subtilis and S.aureus, and hemolytic activity against sheep, pig and guinea pig red blood cells. Has insecticidal activity against S.frugiperda ovarian cells by opening non-selective ion channels. Enhances the insecticidal activity of spider venom neurotoxic peptides. This is M-oxotoxin-Ot2b from Oxyopes takobius (Lynx spider).